We begin with the raw amino-acid sequence, 1053 residues long: Serine/threonine-protein phosphatase 6 regulatory ankyrin repeat subunit A (1053 aa).

ANK repeat units follow at residues 40–69, 73–102, 106–135, 139–168, 172–201, 205–234, 238–267, 271–301, 305–334, 338–367, 371–400, 404–433, 437–466, 470–500, 504–534, 549–578, 582–611, 616–645, 652–681, 685–714, 718–747, 755–784, 787–817, 822–851, 855–885, 889–918, and 925–954; these read EKRTPLHAAAYLGDAEIIELLILSGARVNA, KWLTPLHRAVASCSEEAVQVLLKHSADVNA, NWQTPLHIAAANKAVKCAEALVPLLSNVNV, AGRTALHHAAFSGHGEMVKLLLSRGANINA, KDRRAIHWAAYMGHIEVVKLLVSHGAEVTC, KSYTPLHAAASSGMISVVKYLLDLGVDMNE, YGNTPLHVACYNGQDVVVNELIDCGAIVNQ, KGFTPLHFAAASTHGALCLELLVGNGADVNM, DGKTPLHMTALHGRFSRSQTIIQSGAVIDC, NGNTPLHIAARYGHELLINTLITSGADTAK, HGMFPLHLAALSGFSDCCRKLLSSGFDIDT, FGRTCLHAAAAGGNLECLNLLLNTGADFNK, FGRSPLHYAAANCNYQCLFALVGSGASVND, RGCTPLHYAATSDTDGKCLEYLLRNDANPGI, QGYNAVHYSAAYGHRLCLQLIASETPLDVLM, ATISPLHLAAYHGHHQALEVLVQSLLDLDV, SGRTPLDLAAFKGHVECVDVLINQGASILV, LKRTPIHAAATNGHSECLRLLIGNAEPQNA, NGQTPLMLSVLNGHTDCVYSLLNKGANVDA, WGRTALHRGAVTGHEECVDALLQHGAKCLL, RGRTPIHLSAACGHIGVLGALLQSAASMDA, HGYTALHWACYNGHETCVELLLEQEVFQKT, NAFSPLHCAVINDNEGAAEMLIDTLGASIVN, KGRTPLHAAAFTDHVECLQLLLSHNAQVNS, TGKTPLMMAAENGQTNTVEMLVSSASAELTL, SKNTALHLACSKGHETSALLILEKITDRNL, and ALQTPLHVAARNGLTMVVQELLGKGASVLA. 2 positions are modified to phosphoserine: serine 1007 and serine 1011.

As to quaternary structure, protein phosphatase 6 (PP6) holoenzyme is proposed to be a heterotrimeric complex formed by the catalytic subunit, a SAPS domain-containing subunit (PP6R) and an ankyrin repeat-domain containing regulatory subunit (ARS). Interacts with PPP6C, PPP6R1 and PPP6R3. Interacts with PPP1C and HNRPK. Ubiquitinated by the ECS(RAB40C) complex leading to its degradation and decreased PP6 activity.

The protein resides in the nucleus. It localises to the nucleoplasm. The protein localises to the cytoplasm. Its subcellular location is the cytosol. It is found in the cell projection. The protein resides in the lamellipodium. Its function is as follows. Regulatory subunit of protein phosphatase 6 (PP6) that may be involved in the recognition of phosphoprotein substrates. Involved in the PP6-mediated dephosphorylation of NFKBIE opposing its degradation in response to TNF-alpha. Selectively inhibits the phosphatase activity of PPP1C. Targets PPP1C to modulate HNRPK phosphorylation. Involved in the PP6-mediated dephosphorylation of MOB1 and induced focal adhesion assembly during cell migration. This is Serine/threonine-protein phosphatase 6 regulatory ankyrin repeat subunit A from Homo sapiens (Human).